The primary structure comprises 207 residues: Guanylate kinase (207 aa).

A Guanylate kinase-like domain is found at 5-184 (GNLFIVSAPS…ALADLSAIIR (180 aa)). 12 to 19 (APSGAGKS) is a binding site for ATP. The segment at 30-49 (PSDKQVSVSHTTRKPRPGEV) is disordered.

This sequence belongs to the guanylate kinase family.

Its subcellular location is the cytoplasm. The catalysed reaction is GMP + ATP = GDP + ADP. Functionally, essential for recycling GMP and indirectly, cGMP. The chain is Guanylate kinase from Shewanella frigidimarina (strain NCIMB 400).